Consider the following 207-residue polypeptide: Ribosomal RNA small subunit methyltransferase G (207 aa).

S-adenosyl-L-methionine-binding positions include Gly73, Leu78, 124 to 125, and Arg139; that span reads VE.

The protein belongs to the methyltransferase superfamily. RNA methyltransferase RsmG family.

It is found in the cytoplasm. It catalyses the reaction guanosine(527) in 16S rRNA + S-adenosyl-L-methionine = N(7)-methylguanosine(527) in 16S rRNA + S-adenosyl-L-homocysteine. In terms of biological role, specifically methylates the N7 position of guanine in position 527 of 16S rRNA. The polypeptide is Ribosomal RNA small subunit methyltransferase G (Salmonella arizonae (strain ATCC BAA-731 / CDC346-86 / RSK2980)).